The chain runs to 906 residues: Pre-mRNA-splicing factor prp1 (906 aa).

Disordered stretches follow at residues 50–129 (IEQR…VSSQ) and 142–164 (DEDWNNIPEPGDLTRKKRTKQPR). The span at 108 to 124 (REKQEQLQKEKYEKENP) shows a compositional bias: basic and acidic residues. The residue at position 235 (S235) is a Phosphoserine. HAT repeat units follow at residues 258-290 (GDIRKARKLLQSVIETNPKHASGWVAAARLEEV), 322-353 (HPAAEAKVIIANAVKKLPKSVTLWLEAEKLEN), 354-384 (QAQHKKRIIKKALEFNPTSVSLWKEAVNLEE), 385-416 (EVDNARILLARAVELIPMSIDLWLALARLETY), 524-556 (KCIDCARAVFAFSLRVYPKSEKLWLRAVELEKL), 558-590 (GTTESVCSILEKAVESCPKAEILWLLYAKERKN), 592-624 (NDIAGARNILGRAFEYNSNSEEIWLAAVRIEFV), 693-725 (EQIELARDAYLAGTKVCPYSIPLWLLLAKLEEK), 726-758 (QSVIRARVVFDRAKVKNPKNEFLWLELIKMELR), 760-792 (GNISQVRAALAKALQECPSSGLLWTEAIWLEPR), and 824-856 (KKADKARSWFLKAVKADQDNGDVWCWFYKYSLE).

Interacts with brr2 and spp42.

Its subcellular location is the nucleus. Involved in pre-mRNA splicing. Interacts with prp6 and prp13. May also be involved in the regulation of the G0-G1/G2 transition. Required for pre-spliceosome formation, which is the first step of pre-mRNA splicing. This protein is associated with snRNP U5. Has a role in branch site-3' splice site selection. Associates with the branch site-3' splice 3'-exon region. The sequence is that of Pre-mRNA-splicing factor prp1 (prp1) from Schizosaccharomyces pombe (strain 972 / ATCC 24843) (Fission yeast).